The following is a 149-amino-acid chain: MTVFKEILGNITDIENVESYQIENIHLTSDDVLKRVIIISSDQNVEYGIRLEEDKKLRDGDILYKDDYKLVVIRLELSDVLIITARTIGEMAQIAHNLGNRHMPAQFTETQMIVPYDYLVEQYLQDNKALYEREKIKLKEAFRHCSDAK.

The protein belongs to the UreE family.

Its subcellular location is the cytoplasm. Functionally, involved in urease metallocenter assembly. Binds nickel. Probably functions as a nickel donor during metallocenter assembly. The polypeptide is Urease accessory protein UreE (Ureaplasma urealyticum serovar 10 (strain ATCC 33699 / Western)).